The primary structure comprises 23 residues: Phallacidin proprotein 1 (23 aa).

Residue Pro1 is a propeptide. Positions 2–8 form a cross-link, cyclopeptide (Ala-Pro); the sequence is AWLVDCP. The segment at residues 3-7 is a cross-link (2'-cysteinyl-6'-hydroxytryptophan sulfoxide (Trp-Cys)); it reads WLVDC. Residues 9 to 23 constitute a propeptide that is removed on maturation; sequence CVGDDVNRLLTRGER.

This sequence belongs to the MSDIN fungal toxin family. Post-translationally, processed by the macrocyclase-peptidase enzyme POPB to yield a toxic cyclic heptapeptide. POPB first removes 10 residues from the N-terminus. Conformational trapping of the remaining peptide forces the enzyme to release this intermediate rather than proceed to macrocyclization. The enzyme rebinds the remaining peptide in a different conformation and catalyzes macrocyclization of the N-terminal 7 residues.

Functionally, toxin that belongs to the bicyclic heptapeptides called phallotoxins. Although structurally related to amatoxins, phallotoxins have a different mode of action, which is the stabilization of F-actin. Phallotoxins are poisonous when administered parenterally, but not orally because of poor absorption. The sequence is that of Phallacidin proprotein 1 from Amanita exitialis (Guangzhou destroying angel).